The following is a 465-amino-acid chain: MSKTVLNAVGTPLYYSGSSTAWFSATGSGPTLHGTAGNDSMWGDSSVNVTMIGGRGDDIYYLYSSINRAYEAAGEGVDTISTWMSYTLPANFENLTVTGSGRFAFGNEADNIIKGGSGTQTIDGRGGNDVLIGAGGADTFVFARGNGSDLITDFNYDDIVRLDGYGFTSFEQILSNVAQEGADLRLHLADGESLVFANTTADELQAHQFRLSLDRSVLSQTFSDEFNTLQLRNGTSGVWDAKFWWAPEKGATLSSNGEQQWYINPSYEPTASVNPFSVNNGVLTITAAPASEAIQAEINGYDYTSGMLTTYSSFAQTYGYFEMRADMPDDQGVWPAFWLLPADGSWPPELDVVEMRGQDSNTVIATVHSNETGSRTSIENSVKVADASGFHTYGVLWTEEEIVWYFDDAAIARADTPSDMHDPMYMLVNLAVGGIAGTPRDGLADGSEMKIDYIKAYSLDADWQI.

Hemolysin-type calcium-binding repeat units lie at residues 33–50 (HGTAGNDSMWGDSSVNVT), 105–122 (FGNEADNIIKGGSGTQTI), and 123–140 (DGRGGNDVLIGAGGADTF). Residues 206–462 (AHQFRLSLDR…YIKAYSLDAD (257 aa)) form the GH16 domain. The active-site Nucleophile is the glutamate 349. Glutamate 354 acts as the Proton donor in catalysis.

The protein belongs to the glycosyl hydrolase 16 family.

It localises to the secreted. The protein operates within glycan metabolism; exopolysaccharide biosynthesis. In terms of biological role, cleaves high molecular weight succinoglycan to yield LMW succinoglycan. Dynamically regulates the molecular weight distribution of succinoglycan by cleaving nascent succinoglycan only during a limited period after its synthesis, perhaps before it undergoes a time-dependent change in its conformation or aggregation state. The sequence is that of Endo-1,3-1,4-beta-glycanase ExsH (exsH) from Rhizobium meliloti (strain 1021) (Ensifer meliloti).